The chain runs to 112 residues: Notch-regulated ankyrin repeat-containing protein A (112 aa).

ANK repeat units follow at residues 48–77 and 81–110; these read EGQT…DIRL and EGWS…YSSG.

The protein belongs to the NRARP family.

Its function is as follows. Regulates independently canonical Wnt and Notch signaling by modulating LEF1 and Notch protein turnover. Stabilizes LEF1, a pivotal transcription factor in the Wnt signaling cascade, by blocking its ubiquitination. Involved in angiogenesis; involved in intersegmental vessel patterning during development. The polypeptide is Notch-regulated ankyrin repeat-containing protein A (nrarpa) (Danio rerio (Zebrafish)).